The chain runs to 110 residues: Large ribosomal subunit protein uL22 (110 aa).

It belongs to the universal ribosomal protein uL22 family. Part of the 50S ribosomal subunit.

Its function is as follows. This protein binds specifically to 23S rRNA; its binding is stimulated by other ribosomal proteins, e.g. L4, L17, and L20. It is important during the early stages of 50S assembly. It makes multiple contacts with different domains of the 23S rRNA in the assembled 50S subunit and ribosome. In terms of biological role, the globular domain of the protein is located near the polypeptide exit tunnel on the outside of the subunit, while an extended beta-hairpin is found that lines the wall of the exit tunnel in the center of the 70S ribosome. This Ruthia magnifica subsp. Calyptogena magnifica protein is Large ribosomal subunit protein uL22.